A 149-amino-acid chain; its full sequence is Transcriptional repressor NrdR (149 aa).

Residues 3-34 (CPFCAAEETKVVDSRLAADGYQIRRRRECTSC) fold into a zinc finger. Residues 49-139 (PYVIKNNGNR…VYLSFDDIEE (91 aa)) form the ATP-cone domain.

The protein belongs to the NrdR family. Zn(2+) is required as a cofactor.

In terms of biological role, negatively regulates transcription of bacterial ribonucleotide reductase nrd genes and operons by binding to NrdR-boxes. In Actinobacillus pleuropneumoniae serotype 5b (strain L20), this protein is Transcriptional repressor NrdR.